Consider the following 467-residue polypeptide: FK506-binding protein 4 (467 aa).

Disordered regions lie at residues 64 to 163 (KATG…GDDD) and 208 to 357 (GNFV…KPTS). Acidic residues-rich tracts occupy residues 71–80 (DDDDEEEDEY), 147–163 (SDEE…GDDD), and 213–254 (PEDD…DELD). 2 stretches are compositionally biased toward basic and acidic residues: residues 271–287 (APKL…RPAE) and 312–332 (QKVE…DKKV). The region spanning 381-467 (GDRVGMRYIG…IFDVKLLEIK (87 aa)) is the PPIase FKBP-type domain.

Belongs to the FKBP-type PPIase family. FKBP3/4 subfamily. As to quaternary structure, binds to histones H3 and H4.

The protein localises to the nucleus. The catalysed reaction is [protein]-peptidylproline (omega=180) = [protein]-peptidylproline (omega=0). With respect to regulation, inhibited by both FK506 and rapamycin. In terms of biological role, PPIase that acts as a histone chaperone. Histone proline isomerase that increases the rate of cis-trans isomerization at prolines on the histone H3 N-terminal tail. Proline isomerization influences H3 methylation thereby regulating gene expression. The polypeptide is FK506-binding protein 4 (fkr-4) (Neurospora crassa (strain ATCC 24698 / 74-OR23-1A / CBS 708.71 / DSM 1257 / FGSC 987)).